We begin with the raw amino-acid sequence, 207 residues long: Vexin (207 aa).

A disordered region spans residues 65–104; it reads RDTGDRRWLQTGRLQTARPPGAHPTKTPSRPVGISEPKTS.

The protein belongs to the vexin family.

It localises to the cell membrane. Its subcellular location is the nucleus. Its function is as follows. Required for neurogenesis in the neural plate and retina. Strongly cooperates with neural bHLH factors to promote neurogenesis. The sequence is that of Vexin from Mus musculus (Mouse).